Here is a 249-residue protein sequence, read N- to C-terminus: Fasciclin-like arabinogalactan protein 12 (249 aa).

Residues 1 to 24 (MEHSLIILLFTVLLLLTTTPGILS) form the signal peptide. The FAS1 domain maps to 37-181 (PTNVTKILEK…LAVYQVDKVL (145 aa)). Asparagine 39, asparagine 71, asparagine 143, asparagine 152, and asparagine 159 each carry an N-linked (GlcNAc...) asparagine glycan. The tract at residues 186–219 (VFDPRPPAPAPAPSVSKSKKKKDDSDSSSDDSPA) is disordered. Residue aspartate 220 is the site of GPI-anchor amidated aspartate attachment. Residues 221 to 249 (ASFALRNVGSVCDAVSFCVMSVMLAWFYL) constitute a propeptide, removed in mature form.

It belongs to the fasciclin-like AGP family.

The protein localises to the cell membrane. In terms of biological role, may be a cell surface adhesion protein. The sequence is that of Fasciclin-like arabinogalactan protein 12 (FLA12) from Arabidopsis thaliana (Mouse-ear cress).